Reading from the N-terminus, the 1150-residue chain is MSLRFIYGRAGSGKSQYCLNSIKNRIEEDIDRPLILLVPEQFSFQAEKNLIEVLDEKTGFKTQVLSFKRMAYRVFNEVGGITAKHMNESGKSMLLYNIIEDNKNNLKVFKKAAKRQGFITTISDIITEFKRYNITPEIILNNLENIEGDNLKYKMEDLALIFSQFETRLHKNYIDNEDDLTILVEKLNKSKQFDNAEIWIDEFSSFSPQEYSVLEKLLLKSYRINITLCTDYLNQGRFVDTTDVFSPIKNTENKLLQIIEDNNIKLDKPIALKCDPCARFKNSAELQHLEKNMFSFPYKEYKNETKDICMLKTLNQFTEIENTAKDIIKLCIDKGCRFKDIAVITGDLEGYENIISSVFLQYNIPFFIDKKREINNNPIIVLILSALEVLSKNWTYESVFRYLKTGLLDINNEEMDILENYVLANGIKGYQWTNDKPWEHKSFSNYELEDQALKELLAKINDIRYKAMEPIVTLNKNFKSIDKAKEFCEVLYEFLCNINLPDKIQNMIEDFKVEGEIEKASEYNQIWNIVMEVLDQIVEVIGEEKISLKEFFKILQTGFSEYEIGLIPPTLDQVMVGSITRLRSHNINTLYIVGVNDGIFPSPLKEEGILSDDDREFLGDKGLEIAKDTKSIAFEEQFLVYSTLTTPSKYLRLSYPIADGEGKTLRPSIIISRIKKIFANICEENDIVKLNGEEEELKNISSAKPTFNYLISNLRKDVEGVKIDNIWGDTYKWYLENEFWIEKLNRLIKGFDYTNQSKYIETKKIRNLYGKPLKISVSRVEKFSQCPFAYFVQYGLKAKDRKIFNLSYPDLGIFMHSILEKFSHELEKKGLEWGTMDLNWAEEEIDKLINEELDNKSLDILNSSKRYEYVTKSVKKILKRSIWLIGEHIKRGNFKPSYYELSFDIDGDYPPIAMELHSGEVINLIGRVDRVDLLQKDGATYLKIIDYKSGIKEFKLSDVYYGLQLQLLIYLDAILTELAERSGINGEPGALLYLKLDDPIVKNTVDMSDEEIEKSIIKNLKMKGLILNDPNVIRDMDNIISGISDIIPVMVKKDGGVSEGRSSVATKEEFETLRKYVRYTIIEICEEMLEGNIEIKPYKKKDGSSCDYCIYSSVCKFDTNIRGNKYNILIDKKDEEVWDAIKKKLEYKNI.

8–15 (GRAGSGKS) is a binding site for ATP. [4Fe-4S] cluster is bound by residues Cys-786, Cys-1106, Cys-1109, and Cys-1115.

This sequence belongs to the helicase family. AddB/RexB type 1 subfamily. Heterodimer of AddA and AddB. Mg(2+) serves as cofactor. [4Fe-4S] cluster is required as a cofactor.

Its function is as follows. The heterodimer acts as both an ATP-dependent DNA helicase and an ATP-dependent, dual-direction single-stranded exonuclease. Recognizes the chi site generating a DNA molecule suitable for the initiation of homologous recombination. The AddB subunit has 5' -&gt; 3' nuclease activity but not helicase activity. This is ATP-dependent helicase/deoxyribonuclease subunit B from Clostridium botulinum (strain Okra / Type B1).